The following is a 348-amino-acid chain: Phenylalanine--tRNA ligase alpha subunit (348 aa).

Residue Glu268 coordinates Mg(2+).

Belongs to the class-II aminoacyl-tRNA synthetase family. Phe-tRNA synthetase alpha subunit type 1 subfamily. Tetramer of two alpha and two beta subunits. Mg(2+) is required as a cofactor.

The protein localises to the cytoplasm. The catalysed reaction is tRNA(Phe) + L-phenylalanine + ATP = L-phenylalanyl-tRNA(Phe) + AMP + diphosphate + H(+). The protein is Phenylalanine--tRNA ligase alpha subunit of Bordetella bronchiseptica (strain ATCC BAA-588 / NCTC 13252 / RB50) (Alcaligenes bronchisepticus).